A 311-amino-acid chain; its full sequence is MADSIHYELQYLDLMRRIWVDGDERVDRTGVGTRSLFGETMRFSLKDDAIPLLTTKRVYWKTALRELLWFLTGDTNIRPLVAQGVKIWTDWPLEKYRKATGEAISATDFEARIVADADFAAKWGDLGPVYGHQWVNWPRYEPAGGGLFRRADHGYNQIAALIDSLKNNPGSRRHIFTGWNVADLDRMALPPCHMTYQFHVRSDGGLSCLLFQRSCDLGLGFAFNIFEAALLTRMVAEQCGLYAHEVVWTGGDVHLYLNHAELVEQQLARVPEGKPRLRILRRPPSIFEYRFEDFVVEDYAPQAHISAPVAV.

DUMP contacts are provided by residues Arg28 and 172 to 173 (RR). Cys192 serves as the catalytic Nucleophile. Residues 213-216 (RSCD), Asn224, and 254-256 (HLY) each bind dUMP. Asp216 serves as a coordination point for (6R)-5,10-methylene-5,6,7,8-tetrahydrofolate. Position 310 (Ala310) interacts with (6R)-5,10-methylene-5,6,7,8-tetrahydrofolate.

Belongs to the thymidylate synthase family. Bacterial-type ThyA subfamily. Homodimer.

It is found in the cytoplasm. It catalyses the reaction dUMP + (6R)-5,10-methylene-5,6,7,8-tetrahydrofolate = 7,8-dihydrofolate + dTMP. The protein operates within pyrimidine metabolism; dTTP biosynthesis. Functionally, catalyzes the reductive methylation of 2'-deoxyuridine-5'-monophosphate (dUMP) to 2'-deoxythymidine-5'-monophosphate (dTMP) while utilizing 5,10-methylenetetrahydrofolate (mTHF) as the methyl donor and reductant in the reaction, yielding dihydrofolate (DHF) as a by-product. This enzymatic reaction provides an intracellular de novo source of dTMP, an essential precursor for DNA biosynthesis. This chain is Thymidylate synthase, found in Sphingopyxis alaskensis (strain DSM 13593 / LMG 18877 / RB2256) (Sphingomonas alaskensis).